The primary structure comprises 301 residues: Amine sulfotransferase (301 aa).

Lysine 46–tryptophan 51 serves as a coordination point for 3'-phosphoadenylyl sulfate. Histidine 101 acts as the Proton acceptor in catalysis. 3'-phosphoadenylyl sulfate is bound by residues arginine 123, serine 131, tyrosine 186, alanine 220–methionine 225, and arginine 252–glycine 254.

This sequence belongs to the sulfotransferase 1 family. In terms of tissue distribution, expressed in male liver.

It is found in the cytoplasm. It carries out the reaction a primary amine + 3'-phosphoadenylyl sulfate = a sulfamate + adenosine 3',5'-bisphosphate + 2 H(+). In terms of biological role, sulfotransferase that utilizes 3'-phospho-5'-adenylyl sulfate (PAPS) as sulfonate donor to catalyze the N-sulfonation of amines (PTHP, aniline, 4-chloroaniline, 2-naphthylamine). This is Amine sulfotransferase (SULT3A1) from Oryctolagus cuniculus (Rabbit).